The primary structure comprises 1094 residues: MGNAAGSAEQPAGPTASPPKQPAVPKQPMPAAGELEERFTRVLNCMNLPPDKVQLLSQYDNEKKWELICDQERFQVKNPPAAYIQKLKSYLDTGGVSRKVASDWMSNLGFKRRVQESTQVLRELETSLRTNHIGWVQEFLNEENRGLDVLLEYLAFAQCSVAYDMESTDSVASGAEKSKPLDQSVEDLSKAPPSSVPKSRLTIKLTPAHSRKALRNSRIVSQKDDVHVCIMCLRAIMNYQSGFSLVMNHPACVNEIALSLNNKSPRTKALVLELLAAVCLVRGGHDIILAAFDNFKEVCGEQHRFEKLMEYFRHEDSNIDFMVACMQFINIVVHSVENMNFRVFLQYEFTHLGLDLYLERLRLTESDKLQVQIQAYLDNVFDVGTLLEETETKNAVLEHMEELQEQVATLTERLRDTENDSMAKIAELEKQLSQARKELETLRERFSESTPMGTSRRIPEPEKVPVPTVVRPSALELKVEELEEKGLIRILRGPGDVVSIEILPGAAATPSGDDAQAPRVSTDSPSTAESIPEAASPPPPPPPPPPPLPNLQSQQEAPPSAPPLAPPLPGCAEPPPAPPLPGDLPPPPPPPPLGTDGPVPPPPPPPPGGPPDILGGQGPDIGPGVKAKKPIQTKFRMPLLNWVALKPSQITGTVFTELNDEKVLQELDMNDFEEHFKTKSQGPCLDISALKGKASQKAPTKTILIEANRAKNLAITLRKGNLGADRICQAIETYDLQTLSLDFLELLTRFLPTDYERSLIARFEKEQRPMEELSEEDRFMLRFSRIQRLPERMNTLTFLGNFPDTAQLLMPQLNAIIAASMSIKSSDKLRQILEIVLAFGNYMNSSKRGAAYGFRLQSLDALLEMKSTDRKQTLLHYLVKVIAEKYPQLTGFHSDLHFLDKAGSVSLDSVLGDVRSLQRGLELTQREFVRQDDCLVLKEFLRANSPTMDKLLADSKTAQEAYESVVEYFGENPKTTSPSMFFSLFSRFTKAYKKAEQEVEQWKKEAAADTSGREEPPTPKSPPKARRQQMDLISELKRKQQKEPLIYESDRDGAIEDIITDLRNQPYIRADTGRRSARRRPPGPPLPVTTDLAL.

Disordered regions lie at residues 1–29 (MGNAAGSAEQPAGPTASPPKQPAVPKQPM), 173–199 (SGAEKSKPLDQSVEDLSKAPPSSVPKS), and 507–627 (AATP…GVKA). A lipid anchor (N-myristoyl glycine) is attached at Gly2. Ser7 is subject to Phosphoserine. Residues 16–28 (ASPPKQPAVPKQP) are compositionally biased toward pro residues. One can recognise a GBD/FH3 domain in the interval 27–464 (QPMPAAGELE…SRRIPEPEKV (438 aa)). Ser184 carries the phosphoserine modification. Positions 519–529 (RVSTDSPSTAE) are enriched in polar residues. Pro residues-rich tracts occupy residues 535 to 549 (ASPPPPPPPPPPPLP) and 559 to 610 (PSAP…PGGP). Positions 627–1018 (AKKPIQTKFR…DTSGREEPPT (392 aa)) constitute an FH2 domain. Residue Ser688 is modified to Phosphoserine. Basic and acidic residues predominate over residues 1002-1017 (WKKEAAADTSGREEPP). Residues 1002-1094 (WKKEAAADTS…PLPVTTDLAL (93 aa)) are disordered. Phosphoserine is present on Ser1021. Positions 1049–1082 (SDRDGAIEDIITDLRNQPYIRADTGRRSARRRPP) constitute a DAD domain.

Belongs to the formin homology family. As to quaternary structure, interacts with RAC1, PFN1 and PFN2. Interacts (activated by RAC1) with SRGAP2 (via SH3 domain); regulates the actin filament severing activity of FMNL1. Myristoylation mediates membrane localization. As to expression, highly expressed in the spleen, lymph node and bone marrow cells.

It localises to the cytoplasm. Its subcellular location is the cell membrane. The protein localises to the cytoplasmic vesicle. It is found in the phagosome. Its function is as follows. Plays a role in the regulation of cell morphology and cytoskeletal organization. Required in the cortical actin filament dynamics and cell shape. May play a role in the control of cell motility and survival of macrophages. This is Formin-like protein 1 (Fmnl1) from Mus musculus (Mouse).